We begin with the raw amino-acid sequence, 476 residues long: UDP-N-acetylmuramoylalanine--D-glutamate ligase (476 aa).

122-128 is an ATP binding site; sequence GSNAKST.

Belongs to the MurCDEF family.

It is found in the cytoplasm. It carries out the reaction UDP-N-acetyl-alpha-D-muramoyl-L-alanine + D-glutamate + ATP = UDP-N-acetyl-alpha-D-muramoyl-L-alanyl-D-glutamate + ADP + phosphate + H(+). It functions in the pathway cell wall biogenesis; peptidoglycan biosynthesis. Cell wall formation. Catalyzes the addition of glutamate to the nucleotide precursor UDP-N-acetylmuramoyl-L-alanine (UMA). In Psychrobacter arcticus (strain DSM 17307 / VKM B-2377 / 273-4), this protein is UDP-N-acetylmuramoylalanine--D-glutamate ligase.